We begin with the raw amino-acid sequence, 130 residues long: Large ribosomal subunit protein bL19c (130 aa).

Belongs to the bacterial ribosomal protein bL19 family.

It localises to the plastid. Its subcellular location is the chloroplast. In Chlorella vulgaris (Green alga), this protein is Large ribosomal subunit protein bL19c (rpl19).